The following is a 416-amino-acid chain: Counting factor 60 (416 aa).

A signal peptide spans Met-1 to Ser-22. N-linked (GlcNAc...) asparagine glycosylation is found at Asn-110, Asn-218, Asn-231, Asn-318, and Asn-411.

It belongs to the histidine acid phosphatase family. Component of the counting factor (CF) complex, which includes cf60, cf50, cf45-1 and ctnA.

Its subcellular location is the secreted. Cell-counting factor that limits the maximum size of the multicellular structure. Does not possess acid phosphatase activity. Cells with decreased levels of this protein form large groups while cells overexpressing this protein form small groups. This is Counting factor 60 (cf60) from Dictyostelium discoideum (Social amoeba).